A 708-amino-acid polypeptide reads, in one-letter code: Retrotransposon-derived protein PEG10 (708 aa).

A coiled-coil region spans residues Met1–Pro50. The tract at residues Met21–Ile74 is disordered. Positions Glu26–Lys36 are enriched in polar residues. The segment covering Leu37–Val48 has biased composition (basic and acidic residues). Positions Glu76 to Gly275 are necessary for interaction with ACVRL1. The segment at Asn293–Ala310 adopts a CCHC-type zinc-finger fold. Positions Ala310 to Ala344 are disordered. Glycyl lysine isopeptide (Lys-Gly) (interchain with G-Cter in ubiquitin) cross-links involve residues Lys311 and Lys314. Ser316 and Leu321 each carry phosphoserine. Omega-N-methylarginine is present on residues Arg507, Arg598, and Arg611. Positions Pro683–Leu708 are disordered.

In terms of assembly, homooligomer; homooligomerizes into virion-like capsids. Interacts with ACVRL1. Interacts with SIAH1 and SIAH2. Undergoes proteolytic cleavage. Expressed in the cytotrophoblast layer but not in the overlying syncytiotrophoblast of the placenta. Expressed in prostate and breast carcinomas but not in normal breast and prostate epithelial cells. Expressed in the Hep-G2 cell line (at protein level). Expressed in brain, liver, spleen, kidney, thymus, lung, ovary, testis, reactive lymph node, skeletal muscle, adipose tissue and placenta. Expressed in pancreatic and hepatocellular carcinomas (HCC).

It is found in the extracellular vesicle membrane. The protein resides in the cytoplasm. It localises to the nucleus. Functionally, retrotransposon-derived protein that binds its own mRNA and self-assembles into virion-like capsids. Forms virion-like extracellular vesicles that encapsulate their own mRNA and are released from cells, enabling intercellular transfer of PEG10 mRNA. Binds its own mRNA in the 5'-UTR region, in the region near the boundary between the nucleocapsid (NC) and protease (PRO) coding sequences and in the beginning of the 3'-UTR region. Involved in placenta formation: required for trophoblast stem cells differentiation. Involved at the immediate early stage of adipocyte differentiation. Overexpressed in many cancers and enhances tumor progression: promotes cell proliferation by driving cell cycle progression from G0/G1. Enhances cancer progression by inhibiting the TGF-beta signaling, possibly via interaction with the TGF-beta receptor ACVRL1. May bind to the 5'-GCCTGTCTTT-3' DNA sequence of the MB1 domain in the myelin basic protein (MBP) promoter; additional evidences are however required to confirm this result. This Homo sapiens (Human) protein is Retrotransposon-derived protein PEG10.